The chain runs to 513 residues: Probable cytosol aminopeptidase (513 aa).

Mn(2+) is bound by residues K277 and D282. K289 is an active-site residue. Residues D300, D359, and E361 each contribute to the Mn(2+) site. R363 is an active-site residue.

The protein belongs to the peptidase M17 family. It depends on Mn(2+) as a cofactor.

It is found in the cytoplasm. The enzyme catalyses Release of an N-terminal amino acid, Xaa-|-Yaa-, in which Xaa is preferably Leu, but may be other amino acids including Pro although not Arg or Lys, and Yaa may be Pro. Amino acid amides and methyl esters are also readily hydrolyzed, but rates on arylamides are exceedingly low.. It catalyses the reaction Release of an N-terminal amino acid, preferentially leucine, but not glutamic or aspartic acids.. Functionally, presumably involved in the processing and regular turnover of intracellular proteins. Catalyzes the removal of unsubstituted N-terminal amino acids from various peptides. The chain is Probable cytosol aminopeptidase from Mycobacterium sp. (strain JLS).